A 1174-amino-acid chain; its full sequence is Nucleolar complex protein 1 (1174 aa).

Disordered stretches follow at residues 1 to 20, 29 to 237, 715 to 742, 893 to 922, 944 to 1085, and 1116 to 1174; these read MPAA…NKKI, VVKQ…EESQ, YEDV…VKSS, AQNK…LKEG, GVDE…GGRS, and VKGQ…KRKH. A compositionally biased stretch (basic and acidic residues) spans 33–63; it reads NKKEHPQRPKFEGKEQVKKPQKIKFGEDGKA. Residues 95–104 are compositionally biased toward polar residues; sequence ASKSFNQNHK. Composition is skewed to basic and acidic residues over residues 113 to 122 and 176 to 200; these read KFGEDREAVH and KFGD…EDGA. Composition is skewed to acidic residues over residues 207 to 216 and 715 to 724; these read SDGDSDEELG and YEDVKDEADD. Basic and acidic residues-rich tracts occupy residues 725 to 739 and 897 to 906; these read TKDS…DNDV and KQKEIKKDAA. Composition is skewed to acidic residues over residues 907-916, 945-954, 981-1038, and 1048-1065; these read EEGDDGEAGE, VDEEQDEEEL, AEDE…DEGS, and DSSD…DDED. Residues 1127–1143 are compositionally biased toward basic and acidic residues; the sequence is NKDKSSDKQLKWEENRR. Residues 1156–1166 show a composition bias toward low complexity; sequence GKPAAKGGRPQ.

It belongs to the CBF/MAK21 family.

It is found in the nucleus. It localises to the nucleolus. Its function is as follows. Involved in rRNA processing and ribosome maturation. May also act as a transcription factor. This chain is Nucleolar complex protein 1, found in Drosophila melanogaster (Fruit fly).